Consider the following 2290-residue polypeptide: Protein Ycf2 (2290 aa).

The interval Gly-505–Pro-530 is disordered. Over residues Arg-511 to Gln-523 the composition is skewed to basic and acidic residues. An ATP-binding site is contributed by Gly-1639 to Ser-1646.

This sequence belongs to the Ycf2 family.

Its subcellular location is the plastid. The protein resides in the chloroplast stroma. Functionally, probable ATPase of unknown function. Its presence in a non-photosynthetic plant (Epifagus virginiana) and experiments in tobacco indicate that it has an essential function which is probably not related to photosynthesis. The protein is Protein Ycf2 of Ceratophyllum demersum (Rigid hornwort).